The sequence spans 49 residues: Thymopoietin-1 (49 aa).

The 44-residue stretch at 4 to 47 folds into the LEM-like domain; the sequence is LEDPSVLTKEKLKSELVANNVTLPAGEQRKDVYVELYLQHLTAL. The tract at residues 32-36 is biological activity; it reads RKDVY.

It belongs to the thymopoietin family.

Functionally, hormone of the thymus with pleiotropic actions on prothymocytes, mature T-cells, the nicotinic acetylcholine receptor, and pituitary corticotrophs. This is Thymopoietin-1 from Bos taurus (Bovine).